Reading from the N-terminus, the 341-residue chain is Phosphatidylserine decarboxylase proenzyme (341 aa).

Active-site charge relay system; for autoendoproteolytic cleavage activity residues include Asp-90, His-147, and Ser-254. The active-site Schiff-base intermediate with substrate; via pyruvic acid; for decarboxylase activity is Ser-254. Residue Ser-254 is modified to Pyruvic acid (Ser); by autocatalysis. Residues 287–341 form a disordered region; the sequence is RQDEQTPVVFPEGTELEENDAAQPPVAATSEPVQADGQNPAAEVSGQTGHKPDAP.

The protein belongs to the phosphatidylserine decarboxylase family. PSD-B subfamily. Prokaryotic type I sub-subfamily. As to quaternary structure, heterodimer of a large membrane-associated beta subunit and a small pyruvoyl-containing alpha subunit. Pyruvate is required as a cofactor. Is synthesized initially as an inactive proenzyme. Formation of the active enzyme involves a self-maturation process in which the active site pyruvoyl group is generated from an internal serine residue via an autocatalytic post-translational modification. Two non-identical subunits are generated from the proenzyme in this reaction, and the pyruvate is formed at the N-terminus of the alpha chain, which is derived from the carboxyl end of the proenzyme. The autoendoproteolytic cleavage occurs by a canonical serine protease mechanism, in which the side chain hydroxyl group of the serine supplies its oxygen atom to form the C-terminus of the beta chain, while the remainder of the serine residue undergoes an oxidative deamination to produce ammonia and the pyruvoyl prosthetic group on the alpha chain. During this reaction, the Ser that is part of the protease active site of the proenzyme becomes the pyruvoyl prosthetic group, which constitutes an essential element of the active site of the mature decarboxylase.

Its subcellular location is the cell membrane. The catalysed reaction is a 1,2-diacyl-sn-glycero-3-phospho-L-serine + H(+) = a 1,2-diacyl-sn-glycero-3-phosphoethanolamine + CO2. It functions in the pathway phospholipid metabolism; phosphatidylethanolamine biosynthesis; phosphatidylethanolamine from CDP-diacylglycerol: step 2/2. Functionally, catalyzes the formation of phosphatidylethanolamine (PtdEtn) from phosphatidylserine (PtdSer). The protein is Phosphatidylserine decarboxylase proenzyme of Pectobacterium atrosepticum (strain SCRI 1043 / ATCC BAA-672) (Erwinia carotovora subsp. atroseptica).